Here is a 421-residue protein sequence, read N- to C-terminus: Serine hydroxymethyltransferase (421 aa).

Residues L121 and 125-127 (GHL) each bind (6S)-5,6,7,8-tetrahydrofolate. At K230 the chain carries N6-(pyridoxal phosphate)lysine. Residue 355–357 (SPF) coordinates (6S)-5,6,7,8-tetrahydrofolate.

The protein belongs to the SHMT family. In terms of assembly, homodimer. Requires pyridoxal 5'-phosphate as cofactor.

It is found in the cytoplasm. The enzyme catalyses (6R)-5,10-methylene-5,6,7,8-tetrahydrofolate + glycine + H2O = (6S)-5,6,7,8-tetrahydrofolate + L-serine. The protein operates within one-carbon metabolism; tetrahydrofolate interconversion. It functions in the pathway amino-acid biosynthesis; glycine biosynthesis; glycine from L-serine: step 1/1. Functionally, catalyzes the reversible interconversion of serine and glycine with tetrahydrofolate (THF) serving as the one-carbon carrier. This reaction serves as the major source of one-carbon groups required for the biosynthesis of purines, thymidylate, methionine, and other important biomolecules. Also exhibits THF-independent aldolase activity toward beta-hydroxyamino acids, producing glycine and aldehydes, via a retro-aldol mechanism. The polypeptide is Serine hydroxymethyltransferase (Cellvibrio japonicus (strain Ueda107) (Pseudomonas fluorescens subsp. cellulosa)).